Here is a 212-residue protein sequence, read N- to C-terminus: LVSDASNTKSYISRVAQDGSKSKEIYSGKPTLYLIVRTPGPVGAKIPSKVQKVLQLLRLNKINSGVFVKLTETVYPLLKLLSPYTVIXQPSLQTVRQLVQKRATVTVTHANDEEPRQVKLNDNNLVEEKLGDEGIICIEDIIHETSHLATTFKTVTHFLDPFELNKDVVGYGPLAKLRKLEKQEAEKQRKTSNSGSAPILEIDIDDFVAQQN.

It belongs to the universal ribosomal protein uL30 family.

It is found in the nucleus. The protein localises to the nucleolus. Its function is as follows. Involved in the biogenesis of the 60S ribosomal subunit. May act as a specificity factor that binds precursor rRNAs and tethers the enzymes that carry out the early 5' to 3' exonucleolytic reactions that generate the mature rRNAs. This is Ribosome biogenesis protein RLP7 (RLP7) from Cyberlindnera jadinii (Torula yeast).